Consider the following 148-residue polypeptide: 3-dehydroquinate dehydratase (148 aa).

The active-site Proton acceptor is the Tyr-26. Substrate is bound by residues Asn-77, His-83, and Asp-90. The Proton donor role is filled by His-103. Substrate contacts are provided by residues 104–105 and Arg-114; that span reads LS.

It belongs to the type-II 3-dehydroquinase family. In terms of assembly, homododecamer.

It catalyses the reaction 3-dehydroquinate = 3-dehydroshikimate + H2O. It functions in the pathway metabolic intermediate biosynthesis; chorismate biosynthesis; chorismate from D-erythrose 4-phosphate and phosphoenolpyruvate: step 3/7. Catalyzes a trans-dehydration via an enolate intermediate. The sequence is that of 3-dehydroquinate dehydratase (aroQ) from Pasteurella multocida (strain Pm70).